Consider the following 407-residue polypeptide: Peptidase T (407 aa).

Residue His-77 coordinates Zn(2+). Asp-79 is an active-site residue. Asp-140 provides a ligand contact to Zn(2+). Glu-174 acts as the Proton acceptor in catalysis. The Zn(2+) site is built by Glu-175, Asp-197, and His-379.

It belongs to the peptidase M20B family. Zn(2+) serves as cofactor.

It is found in the cytoplasm. The enzyme catalyses Release of the N-terminal residue from a tripeptide.. Functionally, cleaves the N-terminal amino acid of tripeptides. This chain is Peptidase T, found in Bacteroides fragilis (strain YCH46).